The sequence spans 391 residues: Phosphoglycerate kinase (391 aa).

Substrate is bound by residues Asp16–Asn18, Arg31, His54–Arg57, Arg108, and Arg141. Residues Lys192, Glu314, and Gly340–Thr343 contribute to the ATP site.

It belongs to the phosphoglycerate kinase family. As to quaternary structure, monomer.

The protein resides in the cytoplasm. The catalysed reaction is (2R)-3-phosphoglycerate + ATP = (2R)-3-phospho-glyceroyl phosphate + ADP. It participates in carbohydrate degradation; glycolysis; pyruvate from D-glyceraldehyde 3-phosphate: step 2/5. In Coxiella burnetii (strain RSA 493 / Nine Mile phase I), this protein is Phosphoglycerate kinase.